The primary structure comprises 382 residues: MPMRIERDLHMAIGNGETSYTKNSRIQEKAMFQMKSVLEEATRAVCTTLLPQTMVVADLGCSSGPNTLRFVTEVTRIIAHHCKLEHNRRHDHLPQLQFFLNDLPGNDFNNLFQLIEQFNKSSTTHKGDAATEALQPPCYISGLPGSYYTRIFPSESVHLFHSLFCLQWRSQAPEQLKGTQKSCLDIYITKTMSPSMVKLFQQQFQKDFSLFLRLRYEELVSGGQMVLTFIGRKHEDVFTGESNHLYGLLAQSLKSLVDEGLVEKEKLESFYLPIYSPSVGEVEAIVKQLGLFNMNHVKVFEINWDPYDDSEGDDVHNSIESGENVAKCLRAVMEPLVASQFGERILDELFKEYARRVAKHLENEKTKHAVLVLSIEKAIIHV.

S-adenosyl-L-homocysteine is bound at residue Y20. Residue Q27 participates in anthranilate binding. Residues C61, N66, D102, L103, S146, and Y147 each coordinate S-adenosyl-L-homocysteine. Residue W168 participates in anthranilate binding. Mg(2+) contacts are provided by E268 and F270.

The protein belongs to the methyltransferase superfamily. Type-7 methyltransferase family. SABATH subfamily.

The catalysed reaction is anthranilate + S-adenosyl-L-methionine = O-methyl anthranilate + S-adenosyl-L-homocysteine. Its function is as follows. Methyltransferase involved in the biosynthesis of methyl anthranilate in response to stresses. Utilizes anthranilic acid as substrate, but not salicylic acid. Produces exclusively the O-methyl ester. This is Anthranilate O-methyltransferase 1 (AAMT1) from Zea mays (Maize).